Reading from the N-terminus, the 1213-residue chain is Oligopeptidase PhomG' (1213 aa).

H447 contributes to the Zn(2+) binding site. The active site involves E448. Zn(2+) is bound by residues H451 and H454.

It belongs to the peptidase M3 family. Monomer. The cofactor is Zn(2+).

It functions in the pathway mycotoxin biosynthesis. Functionally, oligopeptidase; part of the gene cluster that mediates the biosynthesis of the phomopsins, a group of hexapeptide mycotoxins which infects lupins and causes lupinosis disease in livestock. Within the pathway, phomG and phomG' are probably involved in the processing of the phomA and phomA' precursors. The pathway starts with the processing of the precursor phomA by several endopeptidases including kexin proteases as well as the cluster-specific S41 family peptidase phomP1 and the oligopeptidase phomG to produce 10 identical copies of the hexapeptide Tyr-Val-Ile-Pro-Ile-Asp. After being excised from the precursor peptide, the core peptides are cyclized and modified post-translationally by enzymes encoded within the gene cluster. The timing and order of proteolysis of the phomA precursor and PTMs are still unknown. Two tyrosinase-like enzymes, phomQ1 and phomQ2, catalyze the chlorination and hydroxylation of Tyr, respectively. PhomYb, is proposed to be involved in the construction of the macrocyclic structure. The other 4 ustYa family proteins may be involved in PTMs that generate the unique structure of phomopsin A. PhomYa is required for the hydroxylation of C-beta of Tyr. PhomYc, phomYd, and phomYe are responsible for the biosynthesis of 2,3-dehydroisoleucine (dIle), 2,3-dehydroaspartic acid (dAsp), and 3,4-dehydroproline (dPro), respectively. While dIle formation by phomYc is indispensable for the installation of dAsp by phomYd, the order of the other PTMs have not been elucidated yet. Most of the biosynthetic enzymes likely have broad substrate specificity, and thus, there might be a metabolic grid from a precursor to phomopsin A. The enzyme(s) responsible for the biosynthesis of 3,4-dehydrovaline (dVal) have also not been identified yet. Finally, phomM acts as an S-adenosylmethionine-dependent alpha-N-methyltransferase that catalyzes two successive N-methylation reactions, converting N-desmethyl-phomopsin A to phomopsin A and phomopsin A further to an N,N-dimethylated congener called phomopsin E. This Diaporthe leptostromiformis (Lupinosis disease fungus) protein is Oligopeptidase PhomG'.